Consider the following 710-residue polypeptide: MTSPLTLSQRALALKTDSTLTLNTQGQLGVSLTPGDGLVLNTNGLSINADPQTLAFNNSGALEVNLDPDGPWSKTATGIDLRLDPTTLEVDNWELGVKLDPDEAIDSGPDGLCLNLDETLLLATNSTSGKTELGVHLNTSGPITADDQGIDLDVDPNTMQVNTGPSGGMLAVKLKSGGGLTADPDGISVTATVAPPSISATAPLTYTSGTIALTTDTQTMQVNSNQLAVKLKTGGGLTADADGISVSVAPTPTISASPPLTYTNGQIGLSIGDQSLQVSSGQLQVKLKSQGGIQQSTQGLGVAVDQTLKIVSNTLEVNTDPSGPLTSGNNGLSLAAVTPLAVSSAGVTLNYQSPLTVTSNSLGLSIAAPLQAGAQGLTVNTMEPLSASAQGIQLHYGQGFQVVAGTLQLLTNPPIVVSSRGFTLLYTPAFTVSNNMLGLNVDGTDCVAISSAGLQIRKEAPLYVTSGSTPALALKYSSDFTITNGALALANSGGGGSSTPEVATYHCGDNLLESYDIFASLPNTNAAKVAAYCRLAAAGGVVSGTIQVTSYAGRWPKVGNSVTDGIKFAIVVSPPMDKDPRSNLSQWLGATVFPAGATTALFSPNPYGSLNTITTLPSIASDWYVPESNLVTYTKIHFKPTGSQQLQLASGELVVAAAKSPVQTTKYELIYLGFTLKQNSSGTNFFDPNASSDLSFLTPPIPFTYLGYYQ.

This sequence belongs to the adenoviridae fiber family. Homotrimer. Interacts (via N-terminal tail region) with pentons.

It is found in the virion. The protein resides in the host nucleus. Its function is as follows. Forms spikes that protrude from each vertex of the icosahedral capsid. Interacts with host receptor to provide virion initial attachment to target cell. Fiber proteins are shed during virus entry, when virus is still at the cell surface. The sequence is that of Fiber protein 1 from Fowl adenovirus A serotype 1 (strain CELO / Phelps) (FAdV-1).